The sequence spans 602 residues: Exo-poly-alpha-D-galacturonosidase (602 aa).

The N-terminal stretch at 1–27 is a signal peptide; sequence MKVITFSRRSALASIVATCLMSTPALA. The 118-residue stretch at 32-149 folds into the Fibronectin type-III domain; the sequence is APQKLQIPTL…TVTTTTTAVP (118 aa). The active-site Proton donor is the aspartate 395. Histidine 428 is an active-site residue.

This sequence belongs to the glycosyl hydrolase 28 family.

Its subcellular location is the secreted. The catalysed reaction is [(1-&gt;4)-alpha-D-galacturonosyl](n) + H2O = alpha-D-galacturonosyl-(1-&gt;4)-D-galacturonate + [(1-&gt;4)-alpha-D-galacturonosyl](n-2). Functionally, contributes significantly to bacterial utilization of polygalacturonate and the induction of pectate lyase in the presence of extracellular pectic polymers. In Dickeya chrysanthemi (Pectobacterium chrysanthemi), this protein is Exo-poly-alpha-D-galacturonosidase (pehX).